We begin with the raw amino-acid sequence, 857 residues long: Glucans biosynthesis glucosyltransferase H (857 aa).

Transmembrane regions (helical) follow at residues 141–158 (YILL…GWYM), 197–219 (LILF…MGFL), 514–536 (AVFL…LVLS), 570–592 (VALF…ILIW), 605–627 (VTLS…MIFH), and 681–703 (SFLW…SVIS).

It belongs to the glycosyltransferase 2 family. OpgH subfamily.

The protein resides in the cell inner membrane. It participates in glycan metabolism; osmoregulated periplasmic glucan (OPG) biosynthesis. Involved in the biosynthesis of osmoregulated periplasmic glucans (OPGs). The chain is Glucans biosynthesis glucosyltransferase H from Pseudomonas putida (strain ATCC 47054 / DSM 6125 / CFBP 8728 / NCIMB 11950 / KT2440).